We begin with the raw amino-acid sequence, 805 residues long: FAD-dependent monooxygenase verC1 (805 aa).

An N-terminal signal peptide occupies residues 1–20; the sequence is MTFRVIIVGGGVAGLTLASA. 3 residues coordinate FAD: Glu32, Ala46, and Arg107. Asn132 is a glycosylation site (N-linked (GlcNAc...) asparagine). The active site involves Tyr214. Asp306 and Ala319 together coordinate FAD. The next 7 membrane-spanning stretches (helical) occupy residues 551 to 571, 604 to 624, 632 to 652, 671 to 691, 703 to 723, 726 to 746, and 761 to 781; these read ALTMAQIPTLFTFYGQMAGLG, IAVLPAIIVSYYIPLSAAFFW, SWLFVWQMHPIWTAITLYLFS, LPVIKFSMTVLVIGAAGFWMW, VFFPTAVPSTQAPFAACVCAI, WDMLSTFGSTFLWLGYLIWDL, and IYGVAAFVALGPGAAIGLGWL.

It belongs to the paxM FAD-dependent monooxygenase family.

It is found in the membrane. It functions in the pathway secondary metabolite biosynthesis; terpenoid biosynthesis. Its pathway is mycotoxin biosynthesis. FAD-dependent monooxygenase; part of the gene cluster that mediates the biosynthesis of the neurotoxin verrucosidin, a methylated alpha-pyrone polyketide that inhibits oxidative phosphorylation in mitochondria and thereby causes neurological diseases. The carbon backbone of verrucosidin is synthesized by the HR-PKS verA, and further modified by the other verrucodidin cluster enzymes. The chain is FAD-dependent monooxygenase verC1 from Penicillium polonicum.